The primary structure comprises 415 residues: Hepatocyte nuclear factor 3-beta (415 aa).

The fork-head DNA-binding region spans 150-244 (KPPYSYISLI…ENGCYLRRQK (95 aa)). Residues 251–262 (KMSMKEPGRKGG) are compositionally biased toward basic and acidic residues. The disordered stretch occupies residues 251–324 (KMSMKEPGRK…GQHLMSQHHS (74 aa)). The span at 266-277 (SANSSSDSCNGN) shows a compositional bias: low complexity. Polar residues predominate over residues 310–323 (SPVSQGQHLMSQHH).

It localises to the nucleus. Its function is as follows. Transcription activator for a number of liver genes. Interacts with the cis-acting regulatory regions of these genes. This chain is Hepatocyte nuclear factor 3-beta (foxa2), found in Oryzias latipes (Japanese rice fish).